Reading from the N-terminus, the 561-residue chain is Terpene synthase 3 (561 aa).

Mg(2+) is bound by residues Asp-315, Asp-319, Asp-458, and Glu-466. Residues 315–319 (DDVYD) carry the DDXXD motif motif.

The protein belongs to the terpene synthase family. Tpsa subfamily. Requires Mg(2+) as cofactor. It depends on Mn(2+) as a cofactor. In terms of tissue distribution, mostly expressed in stems amd leaves, and, to a lower extent, in roots and fruits.

The catalysed reaction is (2E,6E)-farnesyl diphosphate = germacrene D + diphosphate. The enzyme catalyses (2E,6E)-farnesyl diphosphate = alpha-copaene + diphosphate. The protein operates within secondary metabolite biosynthesis; terpenoid biosynthesis. Its function is as follows. Sesquiterpene synthase involved in the biosynthesis of volatile compounds that contribute to the characteristic flavors of black pepper. Mediates the conversion of (2E,6E)-farnesyl diphosphate (FPP) into alpha-copaene and germacrene D. This Piper nigrum (Black pepper) protein is Terpene synthase 3.